The following is a 1164-amino-acid chain: Phospholipid-transporting ATPase IA (1164 aa).

Residues 1–75 (MPTMRRTVSE…PRFLYSQFRR (75 aa)) lie on the Cytoplasmic side of the membrane. S25 bears the Phosphoserine mark. A Phosphothreonine modification is found at T28. At S29 the chain carries Phosphoserine. A helical membrane pass occupies residues 76–96 (AANSFFLFIALLQQIPDVSPT). Residues 97 to 100 (GRYT) are Exoplasmic loop-facing. Residues 101–121 (TLVPLLFILAVAAIKEIIEDI) traverse the membrane as a helical segment. At 122–297 (KRHKADNAVN…SNVERITNVQ (176 aa)) the chain is on the cytoplasmic side. Residues 298–318 (ILILFCILIAMSLVCSVGSAI) traverse the membrane as a helical segment. The Exoplasmic loop portion of the chain corresponds to 319–339 (WNRRHSGKDWYLHLHYGGASN). Residues 340–360 (FGLNFLTFIILFNNLIPISLL) form a helical membrane-spanning segment. The Cytoplasmic segment spans residues 361 to 866 (VTLEVVKFTQ…KCILYCFYKN (506 aa)). D409 acts as the 4-aspartylphosphate intermediate in catalysis. Residues D409, K410, and T411 each coordinate ATP. D409 is a binding site for Mg(2+). Position 411 (T411) interacts with Mg(2+). S443 bears the Phosphoserine mark. ATP-binding positions include E508, F549, K572, R605, T685, G686, D687, 741–748 (ALIIDGKT), R775, and K781. D801 serves as a coordination point for Mg(2+). ATP contacts are provided by N804 and D805. Residue D805 participates in Mg(2+) binding. Residues 867–887 (IVLYIIEIWFAFVNGFSGQIL) form a helical membrane-spanning segment. Residues 888–890 (FER) lie on the Exoplasmic loop side of the membrane. Residues 891–911 (WCIGLYNVMFTAMPPLTLGIF) form a helical membrane-spanning segment. Residues 912–939 (ERSCRKENMLKYPELYKTSQNALDFNTK) lie on the Cytoplasmic side of the membrane. A helical membrane pass occupies residues 940–960 (VFWVHCLNGLFHSVILFWFPL). The Exoplasmic loop segment spans residues 961–977 (KALQYGTVFGNGKTSDY). A helical transmembrane segment spans residues 978-998 (LLLGNFVYTFVVITVCLKAGL). Residues 999-1008 (ETSYWTWFSH) are Cytoplasmic-facing. The chain crosses the membrane as a helical span at residues 1009-1029 (IAIWGSIALWVVFFGIYSSLW). Residues 1030-1044 (PAVPMAPDMSGEAAM) are Exoplasmic loop-facing. Residues 1045–1065 (LFSSGVFWVGLLSIPVASLLL) form a helical membrane-spanning segment. Residues 1066 to 1164 (DVLYKVIKRT…DTTKQRPDEW (99 aa)) lie on the Cytoplasmic side of the membrane. ATP is bound at residue 1095-1102 (GAVVLGKS). Position 1126 is a phosphoserine (S1126).

The protein belongs to the cation transport ATPase (P-type) (TC 3.A.3) family. Type IV subfamily. Component of a P4-ATPase flippase complex which consists of a catalytic alpha subunit and an accessory beta subunit. Interacts with TMEM30A to form a flippase complex; this complex forms an intermediate phosphoenzyme. Interacts with TMEM30B; this interaction is reported conflictingly. The cofactor is Mg(2+). In terms of processing, cleaved by calpain in a caspase- and calcium influx-dependent manner only during platelet apoptosis and may lead to inactivation. In terms of tissue distribution, found in most tissues except liver and testis. Most abundant in brain and lung. Also detected in fetal tissues. Isoform 1 is expressed in brain. Isoform 2 and isoform 3 are expressed in reticulocytes. Expressed in mouse hippocampus in both dentate gyrus (DG) and the CA3 regions. Expressed in both neuronal as well as non-neuronal cells within the DG. Highly expressed in platelets.

It is found in the cytoplasmic vesicle. The protein resides in the secretory vesicle. It localises to the chromaffin granule membrane. Its subcellular location is the cytoplasmic granule. The protein localises to the cell membrane. It is found in the endoplasmic reticulum. The protein resides in the golgi apparatus. It localises to the endomembrane system. It catalyses the reaction ATP + H2O + phospholipidSide 1 = ADP + phosphate + phospholipidSide 2.. The enzyme catalyses a 1,2-diacyl-sn-glycero-3-phospho-L-serine(out) + ATP + H2O = a 1,2-diacyl-sn-glycero-3-phospho-L-serine(in) + ADP + phosphate + H(+). With respect to regulation, ATPase activity is stimulated by phosphatidylserine (PS) and minimally by phosphatidylethanolamine (PE). ATPase activity is inhibited by the vanadate and by the presence of calcium. In terms of biological role, catalytic component of a P4-ATPase flippase complex which catalyzes the hydrolysis of ATP coupled to the transport of aminophospholipids from the outer to the inner leaflet of various membranes and ensures the maintenance of asymmetric distribution of phospholipids. Phospholipid translocation also seems to be implicated in vesicle formation and in uptake of lipid signaling molecules. In vitro, its ATPase activity is selectively and stereospecifically stimulated by phosphatidylserine (PS). The flippase complex ATP8A1:TMEM30A seems to play a role in regulation of cell migration probably involving flippase-mediated translocation of phosphatidylethanolamine (PE) at the cell membrane. Acts as aminophospholipid translocase at the cell membrane in neuronal cells; the activity is associated with hippocampus-dependent learning. May play a role in brain connectivity. The polypeptide is Phospholipid-transporting ATPase IA (Mus musculus (Mouse)).